The chain runs to 124 residues: WAP four-disulfide core domain protein 2 (124 aa).

An N-terminal signal peptide occupies residues 1 to 27 (MPACRPGPLAGALLLGLLLLGLPRVPG). WAP domains are found at residues 29 to 73 (EVEK…CHLP) and 74 to 123 (NEKE…VTPI). 8 disulfide bridges follow: C36–C62, C45–C66, C49–C61, C55–C70, C80–C110, C93–C114, C97–C109, and C103–C119. N44 carries an N-linked (GlcNAc...) asparagine glycan.

Homotrimer; disulfide-linked. In terms of tissue distribution, epididymis. Highest levels are found in the caput and proximal cauda regions. Lower levels in the distal cauda. Not detected in the efferent ducts.

It localises to the secreted. Broad range protease inhibitor. Possible function in sperm maturation. This Canis lupus familiaris (Dog) protein is WAP four-disulfide core domain protein 2 (WFDC2).